We begin with the raw amino-acid sequence, 234 residues long: Transcriptional regulatory protein CseB (234 aa).

The Response regulatory domain maps to 6-119 (HVLFVEDDDV…VLVARIRAVL (114 aa)). Position 55 is a 4-aspartylphosphate (Asp-55). The ompR/PhoB-type DNA-binding region spans 140–234 (GGVLTFGDLE…VRGFGYKLKA (95 aa)).

Phosphorylated by CseC.

The protein localises to the cytoplasm. In terms of biological role, member of the two-component regulatory system CseB/CseC involved in the stability of the cell envelope. CseB activates transcription of RNA polymerase sigma-E factor, in response to changes in the cell envelope. The protein is Transcriptional regulatory protein CseB (cseB) of Streptomyces coelicolor (strain ATCC BAA-471 / A3(2) / M145).